We begin with the raw amino-acid sequence, 262 residues long: Ribosomal RNA small subunit methyltransferase A (262 aa).

Positions 20, 22, 47, 68, 90, and 110 each coordinate S-adenosyl-L-methionine.

Belongs to the class I-like SAM-binding methyltransferase superfamily. rRNA adenine N(6)-methyltransferase family. RsmA subfamily.

The protein localises to the cytoplasm. It catalyses the reaction adenosine(1518)/adenosine(1519) in 16S rRNA + 4 S-adenosyl-L-methionine = N(6)-dimethyladenosine(1518)/N(6)-dimethyladenosine(1519) in 16S rRNA + 4 S-adenosyl-L-homocysteine + 4 H(+). In terms of biological role, specifically dimethylates two adjacent adenosines (A1518 and A1519) in the loop of a conserved hairpin near the 3'-end of 16S rRNA in the 30S particle. May play a critical role in biogenesis of 30S subunits. This is Ribosomal RNA small subunit methyltransferase A from Chlorobium phaeobacteroides (strain BS1).